Here is a 306-residue protein sequence, read N- to C-terminus: tRNA dimethylallyltransferase (306 aa).

11–18 is an ATP binding site; the sequence is GPTAVGKS. Residue 13–18 coordinates substrate; sequence TAVGKS. Positions 35–38 are interaction with substrate tRNA; sequence DSIQ.

The protein belongs to the IPP transferase family. As to quaternary structure, monomer. Requires Mg(2+) as cofactor.

It carries out the reaction adenosine(37) in tRNA + dimethylallyl diphosphate = N(6)-dimethylallyladenosine(37) in tRNA + diphosphate. In terms of biological role, catalyzes the transfer of a dimethylallyl group onto the adenine at position 37 in tRNAs that read codons beginning with uridine, leading to the formation of N6-(dimethylallyl)adenosine (i(6)A). The protein is tRNA dimethylallyltransferase of Borreliella burgdorferi (strain ZS7) (Borrelia burgdorferi).